A 514-amino-acid polypeptide reads, in one-letter code: Putative binding protein HI_0213 (514 aa).

An N-terminal signal peptide occupies residues 1-23 (MNNLFALCQRSAVIFSIIFTVVA). Cysteine 24 carries N-palmitoyl cysteine lipidation. A lipid anchor (S-diacylglycerol cysteine) is attached at cysteine 24.

It belongs to the bacterial solute-binding protein 5 family.

The protein resides in the cell membrane. Its function is as follows. Part of a binding-protein-dependent transport system. The chain is Putative binding protein HI_0213 from Haemophilus influenzae (strain ATCC 51907 / DSM 11121 / KW20 / Rd).